We begin with the raw amino-acid sequence, 268 residues long: MFLVNSFLKGGGGGGGGGGGLGGGLGNVLGGLISGAGGGGGGGGGGGGGGGGGGGGTAMRILGGVISAISEAAAQYNPEPPPPRTHYSNIEANESEEVRQFRRLFAQLAGDDMEVSATELMNILNKVVTRHPDLKTDGFGIDTCRSMVAVMDSDTTGKLGFEEFKYLWNNIKRWQAIYKQFDTDRSGTICSSELPGAFEAAGFHLNEHLYNMIIRRYSDESGNMDFDNFISCLVRLDAMFRAFKSLDKDGTGQIQVNIQEWLQLTMYS.

N-acetylmethionine is present on Met-1. The residue at position 6 (Ser-6) is a Phosphoserine. Residues 91–125 (EANESEEVRQFRRLFAQLAGDDMEVSATELMNILN) form the EF-hand 1; atypical domain. Ca(2+) is bound by residues Ala-109, Asp-112, Glu-114, Glu-119, Asp-137, Asp-152, Asp-154, Thr-156, Lys-158, and Glu-163. EF-hand domains lie at 139–172 (FGIDTCRSMVAVMDSDTTGKLGFEEFKYLWNNIK), 169–204 (NNIKRWQAIYKQFDTDRSGTICSSELPGAFEAAGFH), 205–233 (LNEHLYNMIIRRYSDESGNMDFDNFISCL), and 234–268 (VRLDAMFRAFKSLDKDGTGQIQVNIQEWLQLTMYS). At Lys-179 the chain carries N6-acetyllysine. Ca(2+)-binding residues include Asp-182, Asp-184, Ser-186, Thr-188, Glu-193, and Asp-225.

As to quaternary structure, homodimer or heterodimer of a large (catalytic) and a small (regulatory) subunit. In presence of calcium, the heterodimer dissociates.

The protein resides in the cytoplasm. Its subcellular location is the cell membrane. In terms of biological role, regulatory subunit of the calcium-regulated non-lysosomal thiol-protease which catalyzes limited proteolysis of substrates involved in cytoskeletal remodeling and signal transduction. Essential for embryonic development. The chain is Calpain small subunit 1 (CAPNS1) from Homo sapiens (Human).